Consider the following 202-residue polypeptide: Thymidylate kinase (202 aa).

Residue 7–14 (GIDGSGKT) coordinates ATP.

This sequence belongs to the thymidylate kinase family.

It carries out the reaction dTMP + ATP = dTDP + ADP. Its function is as follows. Phosphorylation of dTMP to form dTDP in both de novo and salvage pathways of dTTP synthesis. The sequence is that of Thymidylate kinase from Ehrlichia canis (strain Jake).